The chain runs to 117 residues: Ribosome maturation factor RimP (117 aa).

It belongs to the RimP family.

The protein resides in the cytoplasm. In terms of biological role, required for maturation of 30S ribosomal subunits. The sequence is that of Ribosome maturation factor RimP from Rickettsia prowazekii (strain Madrid E).